Consider the following 156-residue polypeptide: SsrA-binding protein (156 aa).

The segment at 135–156 (HALRERQDRREADRAMSERKDR) is disordered.

It belongs to the SmpB family.

Its subcellular location is the cytoplasm. Its function is as follows. Required for rescue of stalled ribosomes mediated by trans-translation. Binds to transfer-messenger RNA (tmRNA), required for stable association of tmRNA with ribosomes. tmRNA and SmpB together mimic tRNA shape, replacing the anticodon stem-loop with SmpB. tmRNA is encoded by the ssrA gene; the 2 termini fold to resemble tRNA(Ala) and it encodes a 'tag peptide', a short internal open reading frame. During trans-translation Ala-aminoacylated tmRNA acts like a tRNA, entering the A-site of stalled ribosomes, displacing the stalled mRNA. The ribosome then switches to translate the ORF on the tmRNA; the nascent peptide is terminated with the 'tag peptide' encoded by the tmRNA and targeted for degradation. The ribosome is freed to recommence translation, which seems to be the essential function of trans-translation. In Kineococcus radiotolerans (strain ATCC BAA-149 / DSM 14245 / SRS30216), this protein is SsrA-binding protein.